A 118-amino-acid polypeptide reads, in one-letter code: Large ribosomal subunit protein bL20 (118 aa).

It belongs to the bacterial ribosomal protein bL20 family.

Binds directly to 23S ribosomal RNA and is necessary for the in vitro assembly process of the 50S ribosomal subunit. It is not involved in the protein synthesizing functions of that subunit. This Sulfurihydrogenibium sp. (strain YO3AOP1) protein is Large ribosomal subunit protein bL20.